We begin with the raw amino-acid sequence, 639 residues long: Protein phosphatase EYA4 (639 aa).

An N-acetylmethionine modification is found at Met-1. Disordered stretches follow at residues 1–72, 210–232, and 300–368; these read MEDS…GGEN, QTQS…PQPG, and ADGT…DSDL. Lys-14 is covalently cross-linked (Glycyl lysine isopeptide (Lys-Gly) (interchain with G-Cter in SUMO2)). Residues 18-30 are compositionally biased toward polar residues; the sequence is ESDVSQSQNSRSM. A Glycyl lysine isopeptide (Lys-Gly) (interchain with G-Cter in SUMO2) cross-link involves residue Lys-52. Residues 56 to 66 show a composition bias toward low complexity; that stretch reads SNLSSTSVTTN. The segment covering 300-334 has biased composition (polar residues); that stretch reads ADGTPSSTSTYQLQESLPGLTNQPGEFDTMQSPST. Ser-361 carries the post-translational modification Phosphoserine. Asp-375 (nucleophile) is an active-site residue. Residues Asp-375, Asp-377, and Asp-603 each coordinate Mg(2+). Residue Asp-377 is the Proton donor of the active site.

This sequence belongs to the HAD-like hydrolase superfamily. EYA family. In terms of assembly, interacts with SIX3; translocates EYA4 from the cytoplasm to the nucleus and promotes activation of their target genes. The cofactor is Mg(2+). In terms of tissue distribution, highly expressed in heart and skeletal muscle.

Its subcellular location is the cytoplasm. The protein resides in the nucleus. It carries out the reaction O-phospho-L-tyrosyl-[protein] + H2O = L-tyrosyl-[protein] + phosphate. In terms of biological role, tyrosine phosphatase that specifically dephosphorylates 'Tyr-142' of histone H2AX (H2AXY142ph). 'Tyr-142' phosphorylation of histone H2AX plays a central role in DNA repair and acts as a mark that distinguishes between apoptotic and repair responses to genotoxic stress. Promotes efficient DNA repair by dephosphorylating H2AX, promoting the recruitment of DNA repair complexes containing MDC1. Its function as histone phosphatase probably explains its role in transcription regulation during organogenesis. May be involved in development of the eye. This chain is Protein phosphatase EYA4 (EYA4), found in Homo sapiens (Human).